A 223-amino-acid polypeptide reads, in one-letter code: Ubiquitin-conjugating enzyme E2 S (223 aa).

Met1 carries the N-acetylmethionine modification. A UBC core domain is found at His11 to Gly157. Residue Cys95 is the Glycyl thioester intermediate of the active site. A disordered region spans residues His155–Leu223. A compositionally biased stretch (low complexity) spans Gly169 to Pro195. Position 174 is a phosphoserine (Ser174). Residues Ala209–Leu223 are compositionally biased toward basic residues.

This sequence belongs to the ubiquitin-conjugating enzyme family. As to quaternary structure, component of the APC/C complex, composed of at least 14 distinct subunits that assemble into a complex of at least 19 chains with a combined molecular mass of around 1.2 MDa. Within this complex, directly interacts with ANAPC2 and ANAPC4. Interacts with CDC20, FZR1/CDH1 and VHL. Autoubiquitinated by the APC/C complex during G1, leading to its degradation by the proteasome.

It carries out the reaction S-ubiquitinyl-[E1 ubiquitin-activating enzyme]-L-cysteine + [E2 ubiquitin-conjugating enzyme]-L-cysteine = [E1 ubiquitin-activating enzyme]-L-cysteine + S-ubiquitinyl-[E2 ubiquitin-conjugating enzyme]-L-cysteine.. The protein operates within protein modification; protein ubiquitination. Functionally, accepts ubiquitin from the E1 complex and catalyzes its covalent attachment to other proteins. Catalyzes 'Lys-11'-linked polyubiquitination. Acts as an essential factor of the anaphase promoting complex/cyclosome (APC/C), a cell cycle-regulated ubiquitin ligase that controls progression through mitosis. Acts by specifically elongating 'Lys-11'-linked polyubiquitin chains initiated by the E2 enzyme UBE2C/UBCH10 on APC/C substrates, enhancing the degradation of APC/C substrates by the proteasome and promoting mitotic exit. Also acts by elongating ubiquitin chains initiated by the E2 enzyme UBE2D1/UBCH5 in vitro; it is however unclear whether UBE2D1/UBCH5 acts as an E2 enzyme for the APC/C in vivo. Also involved in ubiquitination and subsequent degradation of VHL, resulting in an accumulation of HIF1A. In vitro able to promote polyubiquitination using all 7 ubiquitin Lys residues, except 'Lys-48'-linked polyubiquitination. In Bos taurus (Bovine), this protein is Ubiquitin-conjugating enzyme E2 S (UBE2S).